Reading from the N-terminus, the 178-residue chain is ATP synthase subunit delta (178 aa).

The protein belongs to the ATPase delta chain family. F-type ATPases have 2 components, F(1) - the catalytic core - and F(0) - the membrane proton channel. F(1) has five subunits: alpha(3), beta(3), gamma(1), delta(1), epsilon(1). F(0) has three main subunits: a(1), b(2) and c(10-14). The alpha and beta chains form an alternating ring which encloses part of the gamma chain. F(1) is attached to F(0) by a central stalk formed by the gamma and epsilon chains, while a peripheral stalk is formed by the delta and b chains.

The protein localises to the cell inner membrane. F(1)F(0) ATP synthase produces ATP from ADP in the presence of a proton or sodium gradient. F-type ATPases consist of two structural domains, F(1) containing the extramembraneous catalytic core and F(0) containing the membrane proton channel, linked together by a central stalk and a peripheral stalk. During catalysis, ATP synthesis in the catalytic domain of F(1) is coupled via a rotary mechanism of the central stalk subunits to proton translocation. In terms of biological role, this protein is part of the stalk that links CF(0) to CF(1). It either transmits conformational changes from CF(0) to CF(1) or is implicated in proton conduction. This chain is ATP synthase subunit delta, found in Methylobacillus flagellatus (strain ATCC 51484 / DSM 6875 / VKM B-1610 / KT).